A 297-amino-acid chain; its full sequence is Putative F-box protein At2g19630 (297 aa).

In terms of domain architecture, F-box spans 11 to 60 (TKNSLQIPIDLIIEIFLRLSVNSIARCRCVSKQWASTLSRPYFTELFLTR).

This chain is Putative F-box protein At2g19630, found in Arabidopsis thaliana (Mouse-ear cress).